Reading from the N-terminus, the 66-residue chain is Large ribosomal subunit protein uL29 (66 aa).

The protein belongs to the universal ribosomal protein uL29 family.

This is Large ribosomal subunit protein uL29 from Syntrophobacter fumaroxidans (strain DSM 10017 / MPOB).